Reading from the N-terminus, the 876-residue chain is Alanine--tRNA ligase (876 aa).

Zn(2+) contacts are provided by histidine 564, histidine 568, cysteine 666, and histidine 670.

This sequence belongs to the class-II aminoacyl-tRNA synthetase family. In terms of assembly, homotetramer. Zn(2+) serves as cofactor.

Its subcellular location is the cytoplasm. It catalyses the reaction tRNA(Ala) + L-alanine + ATP = L-alanyl-tRNA(Ala) + AMP + diphosphate. Catalyzes the attachment of alanine to tRNA(Ala) in a two-step reaction: alanine is first activated by ATP to form Ala-AMP and then transferred to the acceptor end of tRNA(Ala). Also edits incorrectly charged Ser-tRNA(Ala) and Gly-tRNA(Ala) via its editing domain. This Salmonella typhimurium (strain LT2 / SGSC1412 / ATCC 700720) protein is Alanine--tRNA ligase.